A 1072-amino-acid polypeptide reads, in one-letter code: DNA-directed RNA polymerase subunit beta (1072 aa).

The protein belongs to the RNA polymerase beta chain family. In terms of assembly, in plastids the minimal PEP RNA polymerase catalytic core is composed of four subunits: alpha, beta, beta', and beta''. When a (nuclear-encoded) sigma factor is associated with the core the holoenzyme is formed, which can initiate transcription.

Its subcellular location is the plastid. It is found in the chloroplast. The catalysed reaction is RNA(n) + a ribonucleoside 5'-triphosphate = RNA(n+1) + diphosphate. DNA-dependent RNA polymerase catalyzes the transcription of DNA into RNA using the four ribonucleoside triphosphates as substrates. The chain is DNA-directed RNA polymerase subunit beta from Arabidopsis thaliana (Mouse-ear cress).